The following is a 149-amino-acid chain: Large ribosomal subunit protein bL9 (149 aa).

The protein belongs to the bacterial ribosomal protein bL9 family.

Its function is as follows. Binds to the 23S rRNA. The chain is Large ribosomal subunit protein bL9 from Syntrophus aciditrophicus (strain SB).